The following is a 354-amino-acid chain: MSKVKSITRESWILSTFPEWGSWLNEEIEQEQVAPGTFAMWWLGCTGIWLKSEGGTNVCVDFWCGTGKQSHGNPLMKQGHQMQRMAGVKKLQPNLRTPPFVLDPFAIRQIDAVLATHDHNDHIDVNVAAAVMQNCADDVPFIGPKTCVDLWIGWGVPKERCIVVKPGDVVKVKDIEIHALDAFDRTALITLPADQKAAGVLPDGMDDRAVNYLFKTPGGSLYHSGDSHYSNYYAKHGNEHQIDVALGSYGENPRGITDKMTSADMLRMGEALNAKVVIPFHHDIWSNFQAAPQEIRVQWEMKKDRLKYGFKPFIWQVGGKFTWPLDKDNFEYHYPRGFDDCFTIEPDLPFKSFL.

This sequence belongs to the UlaG family. A divalent metal cation serves as cofactor.

The protein resides in the cytoplasm. It catalyses the reaction L-ascorbate 6-phosphate + H2O = 3-dehydro-L-gulonate 6-phosphate. The protein operates within cofactor degradation; L-ascorbate degradation; D-xylulose 5-phosphate from L-ascorbate: step 1/4. Its function is as follows. Probably catalyzes the hydrolysis of L-ascorbate-6-P into 3-keto-L-gulonate-6-P. Is essential for L-ascorbate utilization under anaerobic conditions. In Shigella boydii serotype 4 (strain Sb227), this protein is Probable L-ascorbate-6-phosphate lactonase UlaG.